The primary structure comprises 278 residues: Pantothenate synthetase (278 aa).

28–35 (MGNLHAGH) is a binding site for ATP. H35 acts as the Proton donor in catalysis. Residue Q59 coordinates (R)-pantoate. Position 59 (Q59) interacts with beta-alanine. Residue 145-148 (GKKD) coordinates ATP. Q151 is a binding site for (R)-pantoate. 182–185 (LSSR) provides a ligand contact to ATP.

Belongs to the pantothenate synthetase family. Homodimer.

It localises to the cytoplasm. It catalyses the reaction (R)-pantoate + beta-alanine + ATP = (R)-pantothenate + AMP + diphosphate + H(+). It participates in cofactor biosynthesis; (R)-pantothenate biosynthesis; (R)-pantothenate from (R)-pantoate and beta-alanine: step 1/1. In terms of biological role, catalyzes the condensation of pantoate with beta-alanine in an ATP-dependent reaction via a pantoyl-adenylate intermediate. This is Pantothenate synthetase from Methylobacillus flagellatus (strain ATCC 51484 / DSM 6875 / VKM B-1610 / KT).